Here is a 430-residue protein sequence, read N- to C-terminus: Bifunctional protein GlmU (430 aa).

The tract at residues 1–223 is pyrophosphorylase; it reads MSFSVVILAA…KNEFQGVNSK (223 aa). UDP-N-acetyl-alpha-D-glucosamine is bound by residues 8–11, K22, and 81–82; these read LAAG and GT. D102 provides a ligand contact to Mg(2+). Residues G135, E149, N164, and N221 each coordinate UDP-N-acetyl-alpha-D-glucosamine. Residue N221 coordinates Mg(2+). The segment at 224 to 244 is linker; the sequence is YDLANAEIVMQDRIKRHWMQQ. Residues 245–430 are N-acetyltransferase; the sequence is GVIMRLPQTI…DFYYKFFGKN (186 aa). Positions 308 and 325 each coordinate UDP-N-acetyl-alpha-D-glucosamine. H336 serves as the catalytic Proton acceptor. Residues Y339 and N350 each contribute to the UDP-N-acetyl-alpha-D-glucosamine site. Acetyl-CoA contacts are provided by residues A353, 359–360, S378, A396, and R413; that span reads NY.

It in the N-terminal section; belongs to the N-acetylglucosamine-1-phosphate uridyltransferase family. This sequence in the C-terminal section; belongs to the transferase hexapeptide repeat family. As to quaternary structure, homotrimer. The cofactor is Mg(2+).

Its subcellular location is the cytoplasm. It catalyses the reaction alpha-D-glucosamine 1-phosphate + acetyl-CoA = N-acetyl-alpha-D-glucosamine 1-phosphate + CoA + H(+). It carries out the reaction N-acetyl-alpha-D-glucosamine 1-phosphate + UTP + H(+) = UDP-N-acetyl-alpha-D-glucosamine + diphosphate. It functions in the pathway nucleotide-sugar biosynthesis; UDP-N-acetyl-alpha-D-glucosamine biosynthesis; N-acetyl-alpha-D-glucosamine 1-phosphate from alpha-D-glucosamine 6-phosphate (route II): step 2/2. The protein operates within nucleotide-sugar biosynthesis; UDP-N-acetyl-alpha-D-glucosamine biosynthesis; UDP-N-acetyl-alpha-D-glucosamine from N-acetyl-alpha-D-glucosamine 1-phosphate: step 1/1. Its pathway is bacterial outer membrane biogenesis; LPS lipid A biosynthesis. Its function is as follows. Catalyzes the last two sequential reactions in the de novo biosynthetic pathway for UDP-N-acetylglucosamine (UDP-GlcNAc). The C-terminal domain catalyzes the transfer of acetyl group from acetyl coenzyme A to glucosamine-1-phosphate (GlcN-1-P) to produce N-acetylglucosamine-1-phosphate (GlcNAc-1-P), which is converted into UDP-GlcNAc by the transfer of uridine 5-monophosphate (from uridine 5-triphosphate), a reaction catalyzed by the N-terminal domain. This chain is Bifunctional protein GlmU, found in Nitratiruptor sp. (strain SB155-2).